We begin with the raw amino-acid sequence, 106 residues long: U1-lycotoxin-Ls1z (106 aa).

The first 19 residues, 1–19 (MKVLVVVALLVTLISYSSS), serve as a signal peptide directing secretion. Residues 20 to 40 (EGIDDLEADELLSLMANEQTR) constitute a propeptide that is removed on maturation. 4 cysteine pairs are disulfide-bonded: C43–C58, C50–C67, C57–C85, and C69–C83.

This sequence belongs to the neurotoxin 19 (CSTX) family. 03 subfamily. Expressed by the venom gland.

The protein resides in the secreted. In Lycosa singoriensis (Wolf spider), this protein is U1-lycotoxin-Ls1z.